The chain runs to 170 residues: Peptide deformylase 1 (170 aa).

2 residues coordinate Fe cation: Cys-91 and His-133. Residue Glu-134 is part of the active site. His-137 is a Fe cation binding site.

It belongs to the polypeptide deformylase family. Fe(2+) is required as a cofactor.

It catalyses the reaction N-terminal N-formyl-L-methionyl-[peptide] + H2O = N-terminal L-methionyl-[peptide] + formate. Its function is as follows. Removes the formyl group from the N-terminal Met of newly synthesized proteins. Requires at least a dipeptide for an efficient rate of reaction. N-terminal L-methionine is a prerequisite for activity but the enzyme has broad specificity at other positions. The polypeptide is Peptide deformylase 1 (Vibrio vulnificus (strain CMCP6)).